Here is a 348-residue protein sequence, read N- to C-terminus: Hereditary hemochromatosis protein (348 aa).

A signal peptide spans 1–22; that stretch reads MGPRARPALLLLMLLQTAVLQG. The tract at residues 23–114 is alpha-1; sequence RLLRSHSLHY…IMENHNHSKE (92 aa). The Extracellular segment spans residues 23–306; it reads RLLRSHSLHY…WEPSPSGTLV (284 aa). Asparagine 110, asparagine 130, and asparagine 234 each carry an N-linked (GlcNAc...) asparagine glycan. Positions 115-205 are alpha-2; sequence SHTLQVILGC…ELGRGVLDQQ (91 aa). Intrachain disulfides connect cysteine 124–cysteine 187 and cysteine 225–cysteine 282. An alpha-3 region spans residues 206–297; the sequence is VPPLVKVTHH…GLDQPLIVIW (92 aa). The Ig-like C1-type domain occupies 207-298; the sequence is PPLVKVTHHV…LDQPLIVIWE (92 aa). The interval 298 to 306 is connecting peptide; it reads EPSPSGTLV. Residues 307 to 330 traverse the membrane as a helical segment; sequence IGVISGIAVFVVILFIGILFIILR. Residues 331–348 lie on the Cytoplasmic side of the membrane; that stretch reads KRQGSRGAMGHYVLAERE.

The protein belongs to the MHC class I family. Binds TFR through the extracellular domain in a pH-dependent manner. In terms of tissue distribution, expressed in all tissues tested except brain.

Its subcellular location is the cell membrane. Binds to transferrin receptor (TFR) and reduces its affinity for iron-loaded transferrin. The protein is Hereditary hemochromatosis protein (HFE) of Homo sapiens (Human).